We begin with the raw amino-acid sequence, 413 residues long: Multifunctional CCA protein (413 aa).

Residues Gly8 and Arg11 each contribute to the ATP site. Gly8 and Arg11 together coordinate CTP. Asp21 and Asp23 together coordinate Mg(2+). Positions 91, 143, and 146 each coordinate ATP. The CTP site is built by Arg91, Arg143, and Arg146. Residues 232–333 (TGVHVMMVID…VRLLERADAL (102 aa)) enclose the HD domain.

The protein belongs to the tRNA nucleotidyltransferase/poly(A) polymerase family. Bacterial CCA-adding enzyme type 1 subfamily. In terms of assembly, monomer. Can also form homodimers and oligomers. It depends on Mg(2+) as a cofactor. Requires Ni(2+) as cofactor.

It carries out the reaction a tRNA precursor + 2 CTP + ATP = a tRNA with a 3' CCA end + 3 diphosphate. It catalyses the reaction a tRNA with a 3' CCA end + 2 CTP + ATP = a tRNA with a 3' CCACCA end + 3 diphosphate. Functionally, catalyzes the addition and repair of the essential 3'-terminal CCA sequence in tRNAs without using a nucleic acid template. Adds these three nucleotides in the order of C, C, and A to the tRNA nucleotide-73, using CTP and ATP as substrates and producing inorganic pyrophosphate. tRNA 3'-terminal CCA addition is required both for tRNA processing and repair. Also involved in tRNA surveillance by mediating tandem CCA addition to generate a CCACCA at the 3' terminus of unstable tRNAs. While stable tRNAs receive only 3'-terminal CCA, unstable tRNAs are marked with CCACCA and rapidly degraded. The sequence is that of Multifunctional CCA protein from Burkholderia pseudomallei (strain 668).